Here is a 161-residue protein sequence, read N- to C-terminus: Allophycocyanin beta chain (161 aa).

Asn71 is modified (N4-methylasparagine). Residue Cys81 coordinates (2R,3E)-phycocyanobilin.

This sequence belongs to the phycobiliprotein family. Heterodimer of an alpha and a beta chain. Post-translationally, contains one covalently linked phycocyanobilin chromophore.

The protein localises to the cellular thylakoid membrane. Light-harvesting photosynthetic bile pigment-protein from the phycobiliprotein complex. Allophycocyanin has a maximum absorption at approximately 650 nanometers. The sequence is that of Allophycocyanin beta chain (apcB) from Anabaena variabilis.